Here is a 311-residue protein sequence, read N- to C-terminus: MRIVFAGTPDFAATALKTLLNAGYDIVGVYTQPDRPAGRGRKLMPSPVKQVALDTGIPVYQPVSLKPEEAQQELASLQPDVMIVAAYGLILPKAVLNIPTHGCLNIHASLLPRWRGAAPIQRAIAAGDAETGITIMQMDEGLDTGDMLLKLDTPISADDTGGSLHDRLAEMGGKAIVQAMERLAKGDLTGEVQNEAEANYAHKLSKEEGHIDWSRSAQEIERLIRAFNPWPGTFTDLGEQRIRIHQASALKQGSDKGPGTVIARERDGVDVACGTGTLRITSAQLPGSKAQSINDLINGGKQVLLPGQELN.

109–112 (SLLP) contacts (6S)-5,6,7,8-tetrahydrofolate.

It belongs to the Fmt family.

The catalysed reaction is L-methionyl-tRNA(fMet) + (6R)-10-formyltetrahydrofolate = N-formyl-L-methionyl-tRNA(fMet) + (6S)-5,6,7,8-tetrahydrofolate + H(+). Functionally, attaches a formyl group to the free amino group of methionyl-tRNA(fMet). The formyl group appears to play a dual role in the initiator identity of N-formylmethionyl-tRNA by promoting its recognition by IF2 and preventing the misappropriation of this tRNA by the elongation apparatus. The sequence is that of Methionyl-tRNA formyltransferase from Marinobacter nauticus (strain ATCC 700491 / DSM 11845 / VT8) (Marinobacter aquaeolei).